An 85-amino-acid polypeptide reads, in one-letter code: RDS3 complex subunit 10 (85 aa).

Belongs to the SF3b complex composed of CUS1, HSH49, HSH155, RCP1, RDS3 and RSE1.

It localises to the nucleus. Involved in pre-mRNA splicing. Required for the SF3b integrity and prespliceosome assembly. This Saccharomyces cerevisiae (strain ATCC 204508 / S288c) (Baker's yeast) protein is RDS3 complex subunit 10 (YSF3).